Consider the following 596-residue polypeptide: Pentatricopeptide repeat-containing protein At1g50270 (596 aa).

12 PPR repeats span residues 66 to 102 (SIQL…GVIP), 103 to 136 (SRHT…GLDS), 137 to 167 (DPFV…AEDK), 168 to 202 (DVVT…GVAA), 203 to 237 (NEMT…GRVK), 239 to 269 (DVFI…MPSR), 270 to 304 (NVVT…DVAP), 305 to 339 (NEKT…SIEI), 340 to 370 (NTTA…LHEK), 371 to 405 (NVYT…HVSP), 406 to 436 (NEVT…MKGR), and 442 to 472 (KADH…MPME). The segment at 477–552 (VWGALFGSCL…SPGFSWIEVK (76 aa)) is type E motif. The type E(+) motif stretch occupies residues 553 to 584 (GKLCEFIAFDDKKPLESDDLYKTLDTVGVQMR).

This sequence belongs to the PPR family. PCMP-E subfamily.

In Arabidopsis thaliana (Mouse-ear cress), this protein is Pentatricopeptide repeat-containing protein At1g50270 (PCMP-E42).